We begin with the raw amino-acid sequence, 338 residues long: Glycerol-3-phosphate dehydrogenase [NAD(P)+] (338 aa).

NADPH-binding residues include serine 14, tyrosine 15, histidine 35, and lysine 109. Sn-glycerol 3-phosphate is bound by residues lysine 109, glycine 138, and threonine 140. Alanine 142 contributes to the NADPH binding site. Positions 194, 247, 257, 258, and 259 each coordinate sn-glycerol 3-phosphate. Catalysis depends on lysine 194, which acts as the Proton acceptor. Residue arginine 258 coordinates NADPH. Valine 282 and glutamate 284 together coordinate NADPH.

The protein belongs to the NAD-dependent glycerol-3-phosphate dehydrogenase family.

The protein resides in the cytoplasm. The enzyme catalyses sn-glycerol 3-phosphate + NAD(+) = dihydroxyacetone phosphate + NADH + H(+). It catalyses the reaction sn-glycerol 3-phosphate + NADP(+) = dihydroxyacetone phosphate + NADPH + H(+). It functions in the pathway membrane lipid metabolism; glycerophospholipid metabolism. In terms of biological role, catalyzes the reduction of the glycolytic intermediate dihydroxyacetone phosphate (DHAP) to sn-glycerol 3-phosphate (G3P), the key precursor for phospholipid synthesis. This is Glycerol-3-phosphate dehydrogenase [NAD(P)+] from Sodalis glossinidius (strain morsitans).